A 1171-amino-acid polypeptide reads, in one-letter code: Phytochrome B (1171 aa).

Low complexity predominate over residues 1 to 19 (MASGSRATPTRSPSSARPA). Residues 1–53 (MASGSRATPTRSPSSARPAAPRHQHHHSQSSGGSTSRAGGGGGGGGGGGGGAA) are disordered. Residues 38–52 (AGGGGGGGGGGGGGA) are compositionally biased toward gly residues. In terms of domain architecture, GAF spans 259–442 (DVKLLCDTVV…AFGLQLNMEL (184 aa)). Cys-364 provides a ligand contact to phytochromobilin. PAS domains are found at residues 661-732 (VARE…LRGD) and 795-866 (DYKA…MIVL). In terms of domain architecture, Histidine kinase spans 943 to 1161 (YIYQEIKNPL…FFHIVLELPQ (219 aa)).

This sequence belongs to the phytochrome family. Homodimer. Contains one covalently linked phytochromobilin chromophore.

Regulatory photoreceptor which exists in two forms that are reversibly interconvertible by light: the Pr form that absorbs maximally in the red region of the spectrum and the Pfr form that absorbs maximally in the far-red region. Photoconversion of Pr to Pfr induces an array of morphogenic responses, whereas reconversion of Pfr to Pr cancels the induction of those responses. Pfr controls the expression of a number of nuclear genes including those encoding the small subunit of ribulose-bisphosphate carboxylase, chlorophyll A/B binding protein, protochlorophyllide reductase, rRNA, etc. It also controls the expression of its own gene(s) in a negative feedback fashion. This is Phytochrome B (PHYB) from Oryza sativa subsp. japonica (Rice).